Here is a 400-residue protein sequence, read N- to C-terminus: DNA polymerase IV (400 aa).

A UmuC domain is found at 8–191 (ILLCDANSFF…LPVRELFGIG (184 aa)). Aspartate 12 and aspartate 109 together coordinate Mg(2+). The active site involves glutamate 110.

The protein belongs to the DNA polymerase type-Y family. In terms of assembly, monomer. It depends on Mg(2+) as a cofactor.

Its subcellular location is the cytoplasm. The catalysed reaction is DNA(n) + a 2'-deoxyribonucleoside 5'-triphosphate = DNA(n+1) + diphosphate. Its function is as follows. Poorly processive, error-prone DNA polymerase involved in untargeted mutagenesis. Copies undamaged DNA at stalled replication forks, which arise in vivo from mismatched or misaligned primer ends. These misaligned primers can be extended by PolIV. Exhibits no 3'-5' exonuclease (proofreading) activity. May be involved in translesional synthesis, in conjunction with the beta clamp from PolIII. The sequence is that of DNA polymerase IV from Moorella thermoacetica (strain ATCC 39073 / JCM 9320).